Reading from the N-terminus, the 130-residue chain is Small ribosomal subunit protein uS8 (130 aa).

This sequence belongs to the universal ribosomal protein uS8 family. As to quaternary structure, part of the 30S ribosomal subunit. Contacts proteins S5 and S12.

Its function is as follows. One of the primary rRNA binding proteins, it binds directly to 16S rRNA central domain where it helps coordinate assembly of the platform of the 30S subunit. The sequence is that of Small ribosomal subunit protein uS8 from Pseudomonas putida (strain ATCC 700007 / DSM 6899 / JCM 31910 / BCRC 17059 / LMG 24140 / F1).